A 333-amino-acid polypeptide reads, in one-letter code: Uroporphyrinogen decarboxylase (333 aa).

Substrate contacts are provided by residues 21 to 25 (RQVGR), Asp-70, Tyr-139, Ser-194, and His-309.

This sequence belongs to the uroporphyrinogen decarboxylase family. In terms of assembly, homodimer.

It localises to the cytoplasm. The catalysed reaction is uroporphyrinogen III + 4 H(+) = coproporphyrinogen III + 4 CO2. It functions in the pathway porphyrin-containing compound metabolism; protoporphyrin-IX biosynthesis; coproporphyrinogen-III from 5-aminolevulinate: step 4/4. Its function is as follows. Catalyzes the decarboxylation of four acetate groups of uroporphyrinogen-III to yield coproporphyrinogen-III. This Chlamydia caviae (strain ATCC VR-813 / DSM 19441 / 03DC25 / GPIC) (Chlamydophila caviae) protein is Uroporphyrinogen decarboxylase.